A 137-amino-acid chain; its full sequence is MPTINQLIRKGRKSKVSKSNAPALNFGYNSYKKVATNNPAPQKRGVATRVGTMTPKKPNSALRKYARVRLSNLIEVTAYIPGIGHNLQEHSVVLIRGGRVKDLPGVRYHVIRGALDTAGVEDRRQSRSKYGTKKPKK.

It belongs to the universal ribosomal protein uS12 family. As to quaternary structure, part of the 30S ribosomal subunit. Contacts proteins S8 and S17. May interact with IF1 in the 30S initiation complex.

In terms of biological role, with S4 and S5 plays an important role in translational accuracy. Its function is as follows. Interacts with and stabilizes bases of the 16S rRNA that are involved in tRNA selection in the A site and with the mRNA backbone. Located at the interface of the 30S and 50S subunits, it traverses the body of the 30S subunit contacting proteins on the other side and probably holding the rRNA structure together. The combined cluster of proteins S8, S12 and S17 appears to hold together the shoulder and platform of the 30S subunit. The chain is Small ribosomal subunit protein uS12 from Lactiplantibacillus plantarum (strain ATCC BAA-793 / NCIMB 8826 / WCFS1) (Lactobacillus plantarum).